Consider the following 464-residue polypeptide: 2-oxoadipate dioxygenase/decarboxylase (464 aa).

3 residues coordinate 2-oxoadipate: His-70, Arg-74, and His-226. His-70 contacts Fe(2+). Residues His-226 and Glu-294 each contribute to the Fe(2+) site. Residue Val-402 participates in 2-oxoadipate binding.

Belongs to the 2-oxoadipate dioxygenase/decarboxylase family. Fe(2+) is required as a cofactor.

The enzyme catalyses 2-oxoadipate + O2 = (R)-2-hydroxyglutarate + CO2. Its pathway is amino-acid degradation. Its activity is regulated as follows. Inhibited by EDTA. Functionally, catalyzes the decarboxylation and hydroxylation of 2-oxoadipate (2OA) to form D-2-hydroxyglutarate (D-2-HGA). Is specific for 2-oxoadipate. Is involved in a D-lysine catabolic pathway. This Pseudomonas putida (strain ATCC 47054 / DSM 6125 / CFBP 8728 / NCIMB 11950 / KT2440) protein is 2-oxoadipate dioxygenase/decarboxylase.